Reading from the N-terminus, the 431-residue chain is Helix-loop-helix protein 11 (431 aa).

The segment at 88–109 (LANRSLSQPAPLSPTSLDPDRR) is disordered. Positions 91 to 103 (RSLSQPAPLSPTS) are enriched in polar residues. One can recognise a bHLH domain in the interval 112–163 (MRRQIANCNERRRMQSINAGFLALRALLPRKEGEKLSKAAILQQTADMVHQL). Polar residues-rich tracts occupy residues 226–241 (TTTSSQASSPVTPRSN) and 248–257 (LPSSYASSAL). The tract at residues 226–311 (TTTSSQASSP…PPPTLPSLET (86 aa)) is disordered. Residues 274-291 (TTSTPLSLLTLNGSPTSS) are compositionally biased toward low complexity.

As to expression, expressed in the pharynx, nerve cords, the H-shaped excretory cell, vulva muscles, and the anal depressor (at protein level). Expressed in the intestine (at protein level). In males, it is also expressed in the spicules and hyp7 cells of the hypodermis (at protein level).

It localises to the nucleus. Functionally, transcriptional regulator. Component of a feedback loop involving atfs-1, atgl-1 and hlh-11. Binds to the promoter of the atgl-1 lipase to negatively regulate the expression of atgl-1, and thereby promoting fat oxidation in response to mitochondrial stress and mitochondrial respiration in the intestine. In addition, functions with atfs-1 to maintain lifespan. May have a role in fertility and in positively regulating body size. The protein is Helix-loop-helix protein 11 of Caenorhabditis elegans.